We begin with the raw amino-acid sequence, 509 residues long: Coiled-coil domain-containing protein 181 (509 aa).

A compositionally biased stretch (basic and acidic residues) spans 58–82 (VIEHTKQHSDPDKSLQDEVSPRKND). Disordered regions lie at residues 58–120 (VIEH…EEED), 241–332 (PINN…VTST), and 345–367 (QLEQKREKLKREEERRKIEEEKE). Polar residues-rich tracts occupy residues 243–266 (NNANTTENDPQQLLPRSSNSSVSG) and 300–332 (TCPSSAVISDQSKGNGNSNHRAQSAHISPVTST). Residues 335-375 (LSPRQKELQKQLEQKREKLKREEERRKIEEEKEKKRENDIV) are a coiled coil.

Belongs to the CCDC181 family. Homodimer. Interacts with HOOK1. Interacts with HOOK2. Interacts with HOOK3.

The protein resides in the cytoplasm. It is found in the cytoskeleton. The protein localises to the cell projection. Its subcellular location is the cilium. It localises to the flagellum. Functionally, microtubule-binding protein that localizes to the microtubular manchette of elongating spermatids. In Pongo abelii (Sumatran orangutan), this protein is Coiled-coil domain-containing protein 181.